The primary structure comprises 264 residues: Phosphonoacetaldehyde hydrolase (264 aa).

Asp-9 acts as the Nucleophile in catalysis. Residues Asp-9 and Ala-11 each contribute to the Mg(2+) site. Lys-50 acts as the Schiff-base intermediate with substrate in catalysis. Asp-183 is a Mg(2+) binding site.

The protein belongs to the HAD-like hydrolase superfamily. PhnX family. As to quaternary structure, homodimer. Requires Mg(2+) as cofactor.

The catalysed reaction is phosphonoacetaldehyde + H2O = acetaldehyde + phosphate + H(+). Functionally, involved in phosphonate degradation. The protein is Phosphonoacetaldehyde hydrolase of Bacillus cereus (strain ATCC 14579 / DSM 31 / CCUG 7414 / JCM 2152 / NBRC 15305 / NCIMB 9373 / NCTC 2599 / NRRL B-3711).